A 360-amino-acid polypeptide reads, in one-letter code: tRNA (guanine(9)-N1)-methyltransferase (360 aa).

Residues 1-77 are disordered; it reads MENQDTEQSQ…RRKERIKEAE (77 aa). Composition is skewed to basic and acidic residues over residues 8–24 and 33–55; these read QSQK…DFKR and MTKR…DEYK. Residues 56 to 67 show a composition bias toward basic residues; sequence QKKREKKKAARE. The segment covering 68–77 has biased composition (basic and acidic residues); sequence RRKERIKEAE. The 200-residue stretch at 94-293 folds into the SAM-dependent MTase TRM10-type domain; sequence RAKVAPQEQI…EVLPPRKVKG (200 aa). S-adenosyl-L-methionine-binding positions include 199-200, glycine 219, 223-227, cysteine 231, leucine 245, and 257-259; these read LT, DKNRY, and QVL. Aspartate 223 (proton acceptor) is an active-site residue. The interval 291–360 is disordered; it reads VKGKLTHGSD…SDEPSKGADH (70 aa). Residues 297–306 are compositionally biased toward basic and acidic residues; it reads HGSDPEKSIE. Low complexity predominate over residues 307–324; the sequence is PSEVSEQPVSSEQSEQPV. The segment covering 328 to 343 has biased composition (polar residues); that stretch reads QPVSSEQPVLSEQPVL.

The protein belongs to the class IV-like SAM-binding methyltransferase superfamily. TRM10 family. In terms of assembly, monomer.

It is found in the cytoplasm. It localises to the nucleus. The enzyme catalyses guanosine(9) in tRNA + S-adenosyl-L-methionine = N(1)-methylguanosine(9) in tRNA + S-adenosyl-L-homocysteine + H(+). Its function is as follows. S-adenosyl-L-methionine-dependent guanine N(1)-methyltransferase that catalyzes the formation of N(1)-methylguanine at position 9 (m1G9) in cytoplasmic tRNA. In Debaryomyces hansenii (strain ATCC 36239 / CBS 767 / BCRC 21394 / JCM 1990 / NBRC 0083 / IGC 2968) (Yeast), this protein is tRNA (guanine(9)-N1)-methyltransferase.